The sequence spans 126 residues: Lymphocyte antigen 6E (126 aa).

Positions M1–T20 are cleaved as a signal peptide. Positions L21 to S98 constitute a UPAR/Ly6 domain. Disulfide bonds link C23–C48, C26–C35, C41–C69, C73–C89, and C90–C95. N96 is a glycosylation site (N-linked (GlcNAc...) asparagine). Residue S98 is the site of GPI-anchor amidated serine attachment. Residues G99–E126 constitute a propeptide, removed in mature form.

Expressed by thymic blast cells.

It localises to the cell membrane. The polypeptide is Lymphocyte antigen 6E (LY6E) (Gallus gallus (Chicken)).